We begin with the raw amino-acid sequence, 70 residues long: Large ribosomal subunit protein eL43 (70 aa).

Residues Cys36, Cys39, Cys55, and Cys58 each contribute to the Zn(2+) site. The C4-type zinc-finger motif lies at 36–58 (CPYCKTTGKVIRLASGIWYCKKC).

It belongs to the eukaryotic ribosomal protein eL43 family. Putative zinc-binding subfamily. Part of the 50S ribosomal subunit. Zn(2+) serves as cofactor.

In terms of biological role, binds to the 23S rRNA. This is Large ribosomal subunit protein eL43 from Saccharolobus solfataricus (strain ATCC 35092 / DSM 1617 / JCM 11322 / P2) (Sulfolobus solfataricus).